The primary structure comprises 651 residues: Chaperone protein dnaK1 (651 aa).

Thr197 is modified (phosphothreonine; by autocatalysis).

It belongs to the heat shock protein 70 family.

Acts as a chaperone. This Thermosynechococcus vestitus (strain NIES-2133 / IAM M-273 / BP-1) protein is Chaperone protein dnaK1 (dnaK1).